The following is a 268-amino-acid chain: Ubiquinone/menaquinone biosynthesis C-methyltransferase UbiE (268 aa).

The segment at 1–23 (MTDQHAFATEQVQLDPTLSPTTE) is disordered. The span at 10–23 (EQVQLDPTLSPTTE) shows a compositional bias: polar residues. S-adenosyl-L-methionine contacts are provided by residues Thr-91, Asp-112, 140–141 (NA), and Ser-157.

This sequence belongs to the class I-like SAM-binding methyltransferase superfamily. MenG/UbiE family.

It carries out the reaction a 2-demethylmenaquinol + S-adenosyl-L-methionine = a menaquinol + S-adenosyl-L-homocysteine + H(+). The catalysed reaction is a 2-methoxy-6-(all-trans-polyprenyl)benzene-1,4-diol + S-adenosyl-L-methionine = a 5-methoxy-2-methyl-3-(all-trans-polyprenyl)benzene-1,4-diol + S-adenosyl-L-homocysteine + H(+). Its pathway is quinol/quinone metabolism; menaquinone biosynthesis; menaquinol from 1,4-dihydroxy-2-naphthoate: step 2/2. It functions in the pathway cofactor biosynthesis; ubiquinone biosynthesis. In terms of biological role, methyltransferase required for the conversion of demethylmenaquinol (DMKH2) to menaquinol (MKH2) and the conversion of 2-polyprenyl-6-methoxy-1,4-benzoquinol (DDMQH2) to 2-polyprenyl-3-methyl-6-methoxy-1,4-benzoquinol (DMQH2). The chain is Ubiquinone/menaquinone biosynthesis C-methyltransferase UbiE from Pasteurella multocida (strain Pm70).